An 872-amino-acid chain; its full sequence is Leucine--tRNA ligase (872 aa).

The short motif at Pro-42–His-52 is the 'HIGH' region element. Positions Lys-631 to Ser-635 match the 'KMSKS' region motif. An ATP-binding site is contributed by Lys-634.

It belongs to the class-I aminoacyl-tRNA synthetase family.

The protein localises to the cytoplasm. The catalysed reaction is tRNA(Leu) + L-leucine + ATP = L-leucyl-tRNA(Leu) + AMP + diphosphate. This chain is Leucine--tRNA ligase, found in Blochmanniella pennsylvanica (strain BPEN).